The following is a 60-amino-acid chain: Large ribosomal subunit protein eL37 (60 aa).

Residues cysteine 18, cysteine 21, cysteine 33, and cysteine 36 each contribute to the Zn(2+) site. The C4-type zinc-finger motif lies at 18–36 (CRRCGKNSYHVRKKVCAAC).

This sequence belongs to the eukaryotic ribosomal protein eL37 family. Requires Zn(2+) as cofactor.

Functionally, binds to the 23S rRNA. The protein is Large ribosomal subunit protein eL37 (rpl37e) of Methanothermobacter thermautotrophicus (strain ATCC 29096 / DSM 1053 / JCM 10044 / NBRC 100330 / Delta H) (Methanobacterium thermoautotrophicum).